Here is a 414-residue protein sequence, read N- to C-terminus: Serine/threonine transporter SstT (414 aa).

The next 9 helical transmembrane spans lie at 19 to 39, 55 to 75, 89 to 109, 148 to 168, 189 to 209, 223 to 243, 297 to 317, 323 to 343, and 363 to 383; these read IIVG…LEPV, FVKG…IAAI, IVML…LASF, ALAT…GIAL, IVHL…AATL, LLLV…PFIV, IPLG…VLTL, LGIP…AVCA, and LFGI…VIGV.

This sequence belongs to the dicarboxylate/amino acid:cation symporter (DAACS) (TC 2.A.23) family.

The protein localises to the cell inner membrane. It catalyses the reaction L-serine(in) + Na(+)(in) = L-serine(out) + Na(+)(out). The enzyme catalyses L-threonine(in) + Na(+)(in) = L-threonine(out) + Na(+)(out). In terms of biological role, involved in the import of serine and threonine into the cell, with the concomitant import of sodium (symport system). This chain is Serine/threonine transporter SstT, found in Actinobacillus succinogenes (strain ATCC 55618 / DSM 22257 / CCUG 43843 / 130Z).